Consider the following 445-residue polypeptide: GRAM domain-containing protein 2B (445 aa).

Met1 is modified (N-acetylmethionine). Residues 1–10 (MVKKPISSSD) are compositionally biased toward polar residues. The disordered stretch occupies residues 1-119 (MVKKPISSSD…RKKSSSSSQY (119 aa)). Over residues 18 to 37 (PSSPKSSAGASHSSTDSPSS) the composition is skewed to low complexity. Polar residues-rich tracts occupy residues 56–68 (KSPT…SSVE) and 82–93 (SKSSFDGSNLLS). Basic and acidic residues predominate over residues 94–112 (DKNDCKTESKADSKTERKK). A GRAM domain is found at 123 to 190 (MHFHKLFLDV…FSVTLIKKTK (68 aa)). Phosphoserine is present on residues Ser238, Ser255, and Ser265. The interval 277-331 (DLEGYSSSGSQTPESENSRDFHVTESQTVLNVTKGETKPPRTDAHGSRAPDGKAK) is disordered. A compositionally biased stretch (polar residues) spans 281-291 (YSSSGSQTPES). Over residues 311-330 (GETKPPRTDAHGSRAPDGKA) the composition is skewed to basic and acidic residues.

The chain is GRAM domain-containing protein 2B (Gramd2b) from Rattus norvegicus (Rat).